We begin with the raw amino-acid sequence, 219 residues long: Ribose-5-phosphate isomerase A (219 aa).

Substrate is bound by residues serine 28–threonine 31, aspartate 81–aspartate 84, and lysine 94–glycine 97. Residue glutamate 103 is the Proton acceptor of the active site. Lysine 121 contacts substrate.

The protein belongs to the ribose 5-phosphate isomerase family. As to quaternary structure, homodimer.

The enzyme catalyses aldehydo-D-ribose 5-phosphate = D-ribulose 5-phosphate. The protein operates within carbohydrate degradation; pentose phosphate pathway; D-ribose 5-phosphate from D-ribulose 5-phosphate (non-oxidative stage): step 1/1. Catalyzes the reversible conversion of ribose-5-phosphate to ribulose 5-phosphate. The sequence is that of Ribose-5-phosphate isomerase A from Actinobacillus succinogenes (strain ATCC 55618 / DSM 22257 / CCUG 43843 / 130Z).